The sequence spans 294 residues: Protoheme IX farnesyltransferase (294 aa).

The next 9 membrane-spanning stretches (helical) occupy residues 22 to 42 (VTQLAVFCAVIGMFLATPDLP), 46 to 66 (IVIAATIGIWLLAGAAFAINC), 89 to 109 (ITVPQTLVFSGVIGGAGMWVL), 116 to 136 (LTMWLTFATFVGYAVIYTIIL), 143 to 163 (NIVIGGLSGAMPPALGWAAVA), 170 to 190 (AWILVLIIFIWTPPHFWALAL), 211 to 231 (AFTQFHIWLYTIALVATTMLP), 232 to 252 (FAVGMSGLIYLVVAAVLDVIF), and 272 to 292 (FTYSIIYLSLLFAALLVDHYL).

This sequence belongs to the UbiA prenyltransferase family. Protoheme IX farnesyltransferase subfamily.

Its subcellular location is the cell inner membrane. The catalysed reaction is heme b + (2E,6E)-farnesyl diphosphate + H2O = Fe(II)-heme o + diphosphate. Its pathway is porphyrin-containing compound metabolism; heme O biosynthesis; heme O from protoheme: step 1/1. Its function is as follows. Converts heme B (protoheme IX) to heme O by substitution of the vinyl group on carbon 2 of heme B porphyrin ring with a hydroxyethyl farnesyl side group. The sequence is that of Protoheme IX farnesyltransferase from Herminiimonas arsenicoxydans.